The primary structure comprises 1077 residues: MPLGLFSSGKAQVLCDEKIPGGKKKEPKQLSENKCKGVTLKLDHTRVTIEKQIAEGGFAIVYVASDRKNNKFALKRQFTKDNEKQLEACCREHSFLKQCIGHKNIVEFVDSYTNCLGNGIWECMLLTEYHQKNVLQLMNERISQNQYLTNDEILSIFTDLCEAVSFIHNRPQPIIHRDLKVENVLISSHKPPHYVLCDFGSATTQILSVEKYGVEYVKSEVERNTTMCYRSPEMIDFYSGLEIGLKSDIWALGVLLYRLCFFCVPFEESPLAIQSVNYQFPSVPNIPDEIKVLIYMLLDIDVNRRPSIYQTSVLAFEANHRKPLSEEIQNKKCTDAVPSLKSCIQLMRDGSNPRNKRDSSPRNPEAPPIQSSSKMASLSQQVPSISNISMPSGSGTVETSVAPRLRPKATTVVPNVPSISPVPPVGLPHLRLPSKGSTDETDGSQVRKVPIDFHHRQSFSGEEQLKPAAEADSAGPLSCPLIKPTDLGFTDLDKPALPRDRAQTDGKRRLPHESDIIFQQQHRRNVSDTSQISRSAFKPYSSQQTTSKTSSQVVRSVEDMSQRQNGGSGEWNPFLVAPFSNNSISRKDGQESAFMMDDSHFGMVFDEIRRKEIPAELDSETSSIDSRDPFGAAPFDQLTVSTSSSAQPVSLPPATDEDDERQLLSETDEEEKYEIDEKEEIQTKKDETINEEDSEIDEQRMNDRRRYSYENIDGVGDDASSDSRGKTDRDDSEEEEDDDSRRGGDTSHDEDSQNTVGSEDGEGGSRPLLEDDGLEDDDDHELISSFSSSSTNYPPLFIGTSTPHTQNPITNPFLRDELTPKMIITAPLPTAKNNLDDDWDLGDRWTDRRDTVFERPASEHQNVFAPATLPRQATPLVCRFKPDLPTAAPVSIIPSMSNTSFPEAVRDSDTVPCEPIIGTLISVGAPTDPPPPPLPKKPTEASPTQETTATIPVALGKKEKLLKKEKKKEKKDGKKDKLKLEEYREKGSSEPETDGSEAEIWTNDGATTFSNKKKKKSTFGLRSSHPSIVANDLQFSSPMPPVVKKSSKDKKSSLTGKNASFVNTSFQPEDHDDPTDL.

The 271-residue stretch at 47 to 317 (VTIEKQIAEG…IYQTSVLAFE (271 aa)) folds into the Protein kinase domain. ATP-binding positions include 53-61 (IAEGGFAIV) and K75. The active-site Proton acceptor is the D178. Disordered regions lie at residues 347–444 (MRDG…TDGS), 488–554 (GFTD…SQVV), 616–813 (ELDS…TNPF), and 920–1077 (LISV…PTDL). Positions 369 to 399 (IQSSSKMASLSQQVPSISNISMPSGSGTVET) are enriched in polar residues. Over residues 491 to 515 (DLDKPALPRDRAQTDGKRRLPHESD) the composition is skewed to basic and acidic residues. Positions 541–554 (SSQQTTSKTSSQVV) are enriched in low complexity. Residues 638–648 (LTVSTSSSAQP) are compositionally biased toward polar residues. A compositionally biased stretch (acidic residues) spans 655-679 (TDEDDERQLLSETDEEEKYEIDEKE). Composition is skewed to basic and acidic residues over residues 697–708 (DEQRMNDRRRYS) and 739–751 (DSRR…HDED). Positions 770–780 (EDDGLEDDDDH) are enriched in acidic residues. Over residues 799 to 810 (GTSTPHTQNPIT) the composition is skewed to polar residues. Over residues 927–936 (TDPPPPPLPK) the composition is skewed to pro residues. A compositionally biased stretch (polar residues) spans 941–950 (ASPTQETTAT). A compositionally biased stretch (basic residues) spans 960-969 (KLLKKEKKKE). Basic and acidic residues predominate over residues 970–989 (KKDGKKDKLKLEEYREKGSS). Polar residues predominate over residues 1054-1067 (LTGKNASFVNTSFQ).

The protein belongs to the protein kinase superfamily. Ser/Thr protein kinase family. It depends on Mg(2+) as a cofactor.

Its subcellular location is the cytoplasm. It catalyses the reaction L-seryl-[protein] + ATP = O-phospho-L-seryl-[protein] + ADP + H(+). The catalysed reaction is L-threonyl-[protein] + ATP = O-phospho-L-threonyl-[protein] + ADP + H(+). In terms of biological role, serine/threonine-protein kinase which may play a role in lin-12-mediated cell-fate decisions. In Caenorhabditis elegans, this protein is Serine/threonine-protein kinase sel-5.